The primary structure comprises 186 residues: Elongation factor P (186 aa).

This sequence belongs to the elongation factor P family.

Its subcellular location is the cytoplasm. It participates in protein biosynthesis; polypeptide chain elongation. In terms of biological role, involved in peptide bond synthesis. Stimulates efficient translation and peptide-bond synthesis on native or reconstituted 70S ribosomes in vitro. Probably functions indirectly by altering the affinity of the ribosome for aminoacyl-tRNA, thus increasing their reactivity as acceptors for peptidyl transferase. The polypeptide is Elongation factor P (Clostridium acetobutylicum (strain ATCC 824 / DSM 792 / JCM 1419 / IAM 19013 / LMG 5710 / NBRC 13948 / NRRL B-527 / VKM B-1787 / 2291 / W)).